The primary structure comprises 1050 residues: Mitotic checkpoint serine/threonine-protein kinase BUB1 beta (1050 aa).

One can recognise a BUB1 N-terminal domain in the interval 62-226 (FEYEIRFYTG…FESSVPQRST (165 aa)). The short motif at 111-118 (GEKRYYSD) is the Nuclear localization signal element. The segment at 152-185 (AQFYISWAEEYEARENFRKADAIFQEGIQQKAEP) is necessary for interaction with KNL1. The D-box signature appears at 224–232 (RSTLAELKS). An N6-acetyllysine; by PCAF modification is found at K250. The residue at position 367 (S367) is a Phosphoserine. Positions 368-393 (TRKPGKEEGDPLQRVQSHQQASEEKK) are disordered. Residue S435 is modified to Phosphoserine. Residues 456–480 (IQTTQQERTGDQQEETMPTKETTKL) are disordered. S543, S665, and S670 each carry phosphoserine. Residue S676 is modified to Phosphoserine; by PLK1. S697 carries the phosphoserine modification. The Protein kinase domain occupies 766–1050 (YCIKREYLIC…LTSPGALLFQ (285 aa)). 772–780 (YLICEDYKL) contributes to the ATP binding site. T792 carries the phosphothreonine; by PLK1 modification. K795 is an ATP binding site. D882 acts as the Proton acceptor in catalysis. A Phosphothreonine; by PLK1 modification is found at T1008. T1042 carries the phosphothreonine modification. Position 1043 is a phosphoserine (S1043).

It belongs to the protein kinase superfamily. Ser/Thr protein kinase family. BUB1 subfamily. As to quaternary structure, interacts with CENPE. Interacts with PLK1. Part of a complex containing BUB3, CDC20 and BUB1B. Interacts with anaphase-promoting complex/cyclosome (APC/C). Interacts with KNL1. Interacts with KAT2B. Interacts with RIPK3. Interacts with the closed conformation form of MAD2L1. In terms of processing, proteolytically cleaved by caspase-3 in a cell cycle specific manner. The cleavage might be involved in the durability of the cell cycle delay. Caspase-3 cleavage is associated with abrogation of the mitotic checkpoint. The major site of cleavage is at Asp-610. Post-translationally, acetylation at Lys-250 regulates its degradation and timing in anaphase entry. Ubiquitinated. Degraded by the proteasome. Ubiquitinated by UBR5, promoting disassembly of the mitotic checkpoint complex from the APC/C complex. In terms of processing, sumoylated with SUMO2 and SUMO3. The sumoylation mediates the association with CENPE at the kinetochore. Post-translationally, autophosphorylated in vitro. Intramolecular autophosphorylation is stimulated by CENPE. Phosphorylated during mitosis and hyperphosphorylated in mitotically arrested cells. Phosphorylation at Ser-670 and Ser-1043 occurs at kinetochores upon mitotic entry with dephosphorylation at the onset of anaphase. As to expression, highly expressed in thymus followed by spleen. Preferentially expressed in tissues with a high mitotic index.

It is found in the cytoplasm. Its subcellular location is the nucleus. The protein resides in the chromosome. It localises to the centromere. The protein localises to the kinetochore. It is found in the cytoskeleton. Its subcellular location is the microtubule organizing center. The protein resides in the centrosome. The enzyme catalyses L-seryl-[protein] + ATP = O-phospho-L-seryl-[protein] + ADP + H(+). It catalyses the reaction L-threonyl-[protein] + ATP = O-phospho-L-threonyl-[protein] + ADP + H(+). With respect to regulation, kinase activity stimulated by CENPE. In terms of biological role, essential component of the mitotic checkpoint. Required for normal mitosis progression. The mitotic checkpoint delays anaphase until all chromosomes are properly attached to the mitotic spindle. One of its checkpoint functions is to inhibit the activity of the anaphase-promoting complex/cyclosome (APC/C) by blocking the binding of CDC20 to APC/C, independently of its kinase activity. The other is to monitor kinetochore activities that depend on the kinetochore motor CENPE. Required for kinetochore localization of CENPE. Negatively regulates PLK1 activity in interphase cells and suppresses centrosome amplification. Also implicated in triggering apoptosis in polyploid cells that exit aberrantly from mitotic arrest. May play a role for tumor suppression. The chain is Mitotic checkpoint serine/threonine-protein kinase BUB1 beta (BUB1B) from Homo sapiens (Human).